The primary structure comprises 213 residues: ATP phosphoribosyltransferase (213 aa).

It belongs to the ATP phosphoribosyltransferase family. Short subfamily. In terms of assembly, heteromultimer composed of HisG and HisZ subunits.

It is found in the cytoplasm. It catalyses the reaction 1-(5-phospho-beta-D-ribosyl)-ATP + diphosphate = 5-phospho-alpha-D-ribose 1-diphosphate + ATP. The protein operates within amino-acid biosynthesis; L-histidine biosynthesis; L-histidine from 5-phospho-alpha-D-ribose 1-diphosphate: step 1/9. In terms of biological role, catalyzes the condensation of ATP and 5-phosphoribose 1-diphosphate to form N'-(5'-phosphoribosyl)-ATP (PR-ATP). Has a crucial role in the pathway because the rate of histidine biosynthesis seems to be controlled primarily by regulation of HisG enzymatic activity. The polypeptide is ATP phosphoribosyltransferase (Anoxybacillus flavithermus (strain DSM 21510 / WK1)).